We begin with the raw amino-acid sequence, 130 residues long: Ribosome biogenesis inhibitor MINAS-60 (130 aa).

The disordered stretch occupies residues 61–130 (SKVQRIPTRP…RRRRPVTSSC (70 aa)). Residues 109 to 130 (KGRRRRRRMRRRRRRRPVTSSC) show a composition bias toward basic residues.

In terms of assembly, interacts with 60S ribosome assembly factors GTPBP4 and MRTO4.

It localises to the nucleus. It is found in the nucleolus. Functionally, acts as a late-stage inhibitor of pre-60S ribosome assembly by preventing pre-60S ribosome export from nucleus. This is Ribosome biogenesis inhibitor MINAS-60 from Mus musculus (Mouse).